Reading from the N-terminus, the 424-residue chain is Probable ribonuclease FAU-1 (424 aa).

It belongs to the FAU-1 family.

In terms of biological role, probable RNase involved in rRNA stability through maturation and/or degradation of precursor rRNAs. Binds to RNA in loop regions with AU-rich sequences. This chain is Probable ribonuclease FAU-1, found in Saccharolobus islandicus (strain M.16.27) (Sulfolobus islandicus).